The sequence spans 87 residues: Small ribosomal subunit protein bS20 (87 aa).

Residues 1 to 11 are compositionally biased toward basic residues; the sequence is MAHHKSAIKRI. A disordered region spans residues 1–26; the sequence is MAHHKSAIKRIKQNEKRNARNRHQKS.

This sequence belongs to the bacterial ribosomal protein bS20 family.

Its function is as follows. Binds directly to 16S ribosomal RNA. In Trichlorobacter lovleyi (strain ATCC BAA-1151 / DSM 17278 / SZ) (Geobacter lovleyi), this protein is Small ribosomal subunit protein bS20.